The primary structure comprises 500 residues: ATP synthase subunit alpha (500 aa).

ATP is bound at residue 169-176 (GDRQTGKT).

This sequence belongs to the ATPase alpha/beta chains family. As to quaternary structure, F-type ATPases have 2 components, CF(1) - the catalytic core - and CF(0) - the membrane proton channel. CF(1) has five subunits: alpha(3), beta(3), gamma(1), delta(1), epsilon(1). CF(0) has three main subunits: a(1), b(2) and c(9-12). The alpha and beta chains form an alternating ring which encloses part of the gamma chain. CF(1) is attached to CF(0) by a central stalk formed by the gamma and epsilon chains, while a peripheral stalk is formed by the delta and b chains.

It localises to the cell membrane. The enzyme catalyses ATP + H2O + 4 H(+)(in) = ADP + phosphate + 5 H(+)(out). Produces ATP from ADP in the presence of a proton gradient across the membrane. The alpha chain is a regulatory subunit. This chain is ATP synthase subunit alpha, found in Lactococcus lactis subsp. lactis (strain IL1403) (Streptococcus lactis).